Consider the following 314-residue polypeptide: Secreted frizzled-related protein 5 (314 aa).

The first 21 residues, 1 to 21 (MWVAWSARTAALALLLGALHG), serve as a signal peptide directing secretion. Residues 45–162 (SKPPQCLDIP…PLDNDLCIAV (118 aa)) form the FZ domain. 8 cysteine pairs are disulfide-bonded: cysteine 50-cysteine 113, cysteine 60-cysteine 106, cysteine 97-cysteine 132, cysteine 121-cysteine 159, cysteine 125-cysteine 149, cysteine 178-cysteine 250, cysteine 181-cysteine 252, and cysteine 195-cysteine 300. The region spanning 178-300 (CAQCEMEHSA…AVKFMFSYPC (123 aa)) is the NTR domain.

This sequence belongs to the secreted frizzled-related protein (sFRP) family.

It is found in the secreted. Soluble frizzled-related proteins (sFRPS) function as modulators of Wnt signaling through direct interaction with Wnts. They have a role in regulating cell growth and differentiation in specific cell types. SFRP5 may be involved in determining the polarity of photoreceptor, and perhaps, other cells in the retina. In Mus musculus (Mouse), this protein is Secreted frizzled-related protein 5 (Sfrp5).